Consider the following 416-residue polypeptide: Gamma-glutamyl phosphate reductase (416 aa).

It belongs to the gamma-glutamyl phosphate reductase family.

It is found in the cytoplasm. The catalysed reaction is L-glutamate 5-semialdehyde + phosphate + NADP(+) = L-glutamyl 5-phosphate + NADPH + H(+). It participates in amino-acid biosynthesis; L-proline biosynthesis; L-glutamate 5-semialdehyde from L-glutamate: step 2/2. Its function is as follows. Catalyzes the NADPH-dependent reduction of L-glutamate 5-phosphate into L-glutamate 5-semialdehyde and phosphate. The product spontaneously undergoes cyclization to form 1-pyrroline-5-carboxylate. The protein is Gamma-glutamyl phosphate reductase of Streptococcus pyogenes serotype M4 (strain MGAS10750).